A 147-amino-acid polypeptide reads, in one-letter code: S-protein homolog 10 (147 aa).

Positions 1-20 (MNCFSYFFLVIILCAGLNNA) are cleaved as a signal peptide.

Belongs to the plant self-incompatibility (S1) protein family.

It localises to the secreted. This is S-protein homolog 10 from Arabidopsis thaliana (Mouse-ear cress).